We begin with the raw amino-acid sequence, 39 residues long: Cytochrome b559 subunit beta (39 aa).

Residues 14-30 (WLAVHGLAVPTVFFLGS) form a helical membrane-spanning segment. Histidine 18 is a heme binding site.

The protein belongs to the PsbE/PsbF family. As to quaternary structure, heterodimer of an alpha subunit and a beta subunit. PSII is composed of 1 copy each of membrane proteins PsbA, PsbB, PsbC, PsbD, PsbE, PsbF, PsbH, PsbI, PsbJ, PsbK, PsbL, PsbM, PsbT, PsbX, PsbY, PsbZ, Psb30/Ycf12, at least 3 peripheral proteins of the oxygen-evolving complex and a large number of cofactors. It forms dimeric complexes. Heme b serves as cofactor.

It localises to the plastid. It is found in the chloroplast thylakoid membrane. Its function is as follows. This b-type cytochrome is tightly associated with the reaction center of photosystem II (PSII). PSII is a light-driven water:plastoquinone oxidoreductase that uses light energy to abstract electrons from H(2)O, generating O(2) and a proton gradient subsequently used for ATP formation. It consists of a core antenna complex that captures photons, and an electron transfer chain that converts photonic excitation into a charge separation. This is Cytochrome b559 subunit beta from Adiantum capillus-veneris (Maidenhair fern).